Reading from the N-terminus, the 386-residue chain is DNA-directed RNA polymerase subunit Rpo1C (386 aa).

This sequence belongs to the RNA polymerase beta' chain family. Part of the RNA polymerase complex.

It is found in the cytoplasm. It catalyses the reaction RNA(n) + a ribonucleoside 5'-triphosphate = RNA(n+1) + diphosphate. Its function is as follows. DNA-dependent RNA polymerase (RNAP) catalyzes the transcription of DNA into RNA using the four ribonucleoside triphosphates as substrates. Forms part of the jaw domain. This chain is DNA-directed RNA polymerase subunit Rpo1C, found in Methanococcus maripaludis (strain C6 / ATCC BAA-1332).